Reading from the N-terminus, the 246-residue chain is Peptide methionine sulfoxide reductase (246 aa).

The Cysteine sulfenic acid (-SOH) intermediate role is filled by Cys48. Cys48 and Cys246 are disulfide-bonded.

Post-translationally, conjugated to URM1, a ubiquitin-like protein.

It catalyses the reaction L-methionyl-[protein] + [thioredoxin]-disulfide + H2O = L-methionyl-(S)-S-oxide-[protein] + [thioredoxin]-dithiol. It carries out the reaction [thioredoxin]-disulfide + L-methionine + H2O = L-methionine (S)-S-oxide + [thioredoxin]-dithiol. In terms of biological role, has an important function as a repair enzyme for proteins that have been inactivated by oxidation. Catalyzes the reduction of methionine sulfoxide in proteins to methionine. Does not catalyze the reverse reaction involving the oxidation of methionine residues. This chain is Peptide methionine sulfoxide reductase, found in Drosophila melanogaster (Fruit fly).